Reading from the N-terminus, the 464-residue chain is Aspartyl protease AED1 (464 aa).

The signal sequence occupies residues 1 to 25 (MSIMRNFLSMIIMLCVCLNWCFAEG). The Peptidase A1 domain occupies 132–460 (YIVTIGIGTP…DVAGGRVGFA (329 aa)). Catalysis depends on residues Asp150 and Asp345. Cys384 and Cys425 form a disulfide bridge.

It belongs to the peptidase A1 family.

The protein resides in the secreted. Its subcellular location is the extracellular space. It localises to the apoplast. Functionally, aspartyl protease involved in a homeostatic feedback mechanism regulating systemic immunity. Has only mild or no influence on local defenses. Acts downstream of salicylic acid to suppress systemic immunity. The polypeptide is Aspartyl protease AED1 (Arabidopsis thaliana (Mouse-ear cress)).